The primary structure comprises 72 residues: Alpha-elapitoxin-Dpp2d (72 aa).

Cystine bridges form between C3-C21, C14-C42, C27-C31, C46-C57, and C58-C63. An Arginine amide modification is found at R72.

This sequence belongs to the three-finger toxin family. Long-chain subfamily. Type II alpha-neurotoxin sub-subfamily. In terms of assembly, monomer (predominant). Amidation does not significantly affect toxin selectivity, since the activity profile and binding data are reminiscent of classical long-chain 3-finger toxins with a free carboxyl termini. In terms of tissue distribution, expressed by the venom gland.

It is found in the secreted. Binds with high affinity to muscular (IC(50)=114 nM) and neuronal (alpha-7/CHRNA7) (IC(50)=58 nM) nicotinic acetylcholine receptor (nAChR) and inhibits acetylcholine from binding to the receptor, thereby impairing neuromuscular and neuronal transmission. Competitive radioligand binding assays also demonstrate that this toxin competes with epibatidine binding to the Lymnaea stagnalis acetylcholine-binding protein (Ls-AChBP) (IC(50)=4.9 nM). This chain is Alpha-elapitoxin-Dpp2d, found in Dendroaspis polylepis polylepis (Black mamba).